A 321-amino-acid chain; its full sequence is MEVHVCSVGTSLLKNSLDDDNVRKEIERLGLKDWDRLKFDDDRQNRIKENFDSLRKMLLKFIRSKGRRASAELDSLFSTFEKLKHNKSEIYVFLYSTNTSNSQLAGEVIRDYLIEEGIRSELVTVKTISSEENFYEGIVDLFDKVIYRILKFKEQDNEVYINATPGLKPESIFLTLAGLLAGADLIYYKYQEFNDVVILPSPPITIRPKYLDWLIRFAISGYTLSEKRAEELGIPVRLLEAKMLVERKGEDAYRLKDWVRKLLGIYLPIGAQNKYYRVIVEGEGERTFDNEVEAYNYMESKRKEGKNVRVEVPDRVYFLGL.

It belongs to the cOA ring nuclease family. Homodimer. The cofactor is Does not require a metal cofactor..

Its subcellular location is the cytoplasm. It catalyses the reaction cyclic tetraadenylate = 2 5'-hydroxy-diadenylate 2',3'-cylic phosphate. CRISPR (clustered regularly interspaced short palindromic repeat) is an adaptive immune system that provides protection against mobile genetic elements (viruses, transposable elements and conjugative plasmids). CRISPR clusters contain spacers, sequences complementary to antecedent mobile elements, and target invading nucleic acids. CRISPR clusters are transcribed and processed into CRISPR RNA (crRNA). A nuclease that degrades cyclic oligoadenylates (cOA), second messengers that induce an antiviral state important for defense against invading nucleic acids. Destruction of cOA deactivates the Csx1 ribonuclease, preventing uncontrolled degradation of cellular RNA. Slowly degrades cA4 (a tetraadenylate ring) into first a linear tetraadenylate product and secondly into a linear diadenylate product with 5'-OH and 2',3'-cyclic phosphate termini. Is 10-fold less active than SSO2081, suggesting it plays a minor role in cA4 degradation. There may be 2 active sites per homodimer. The protein is CRISPR system ring nuclease SSO1393 of Saccharolobus solfataricus (strain ATCC 35092 / DSM 1617 / JCM 11322 / P2) (Sulfolobus solfataricus).